The following is a 139-amino-acid chain: Cell division protein SepF (139 aa).

Belongs to the SepF family. As to quaternary structure, homodimer. Interacts with FtsZ.

It localises to the cytoplasm. Its function is as follows. Cell division protein that is part of the divisome complex and is recruited early to the Z-ring. Probably stimulates Z-ring formation, perhaps through the cross-linking of FtsZ protofilaments. Its function overlaps with FtsA. The polypeptide is Cell division protein SepF (Coprothermobacter proteolyticus (strain ATCC 35245 / DSM 5265 / OCM 4 / BT)).